The following is a 488-amino-acid chain: Ribulose bisphosphate carboxylase large chain (488 aa).

The substrate site is built by Asn127 and Thr177. Residue Lys179 is the Proton acceptor of the active site. Substrate is bound at residue Lys181. The Mg(2+) site is built by Lys205, Asp207, and Glu208. An N6-carboxylysine modification is found at Lys205. His297 functions as the Proton acceptor in the catalytic mechanism. Substrate is bound by residues Arg298, His330, and Ser382.

The protein belongs to the RuBisCO large chain family. Type I subfamily. Heterohexadecamer of 8 large chains and 8 small chains. The cofactor is Mg(2+).

It is found in the plastid. The protein localises to the chloroplast. The catalysed reaction is 2 (2R)-3-phosphoglycerate + 2 H(+) = D-ribulose 1,5-bisphosphate + CO2 + H2O. The enzyme catalyses D-ribulose 1,5-bisphosphate + O2 = 2-phosphoglycolate + (2R)-3-phosphoglycerate + 2 H(+). Functionally, ruBisCO catalyzes two reactions: the carboxylation of D-ribulose 1,5-bisphosphate, the primary event in carbon dioxide fixation, as well as the oxidative fragmentation of the pentose substrate in the photorespiration process. Both reactions occur simultaneously and in competition at the same active site. This Pyropia dentata (Red alga) protein is Ribulose bisphosphate carboxylase large chain (rbcL).